The following is a 909-amino-acid chain: Probable DNA-directed RNA polymerase subunit beta (909 aa).

The protein belongs to the RNA polymerase beta chain family.

The catalysed reaction is RNA(n) + a ribonucleoside 5'-triphosphate = RNA(n+1) + diphosphate. In terms of biological role, required for late and very late gene expression. May be a component of the novel RNA polymerase activity induced by baculovirus infection. The protein is Probable DNA-directed RNA polymerase subunit beta (LEF-8) of Lepidoptera (butterflies and moths).